The following is a 285-amino-acid chain: Polyamine aminopropyltransferase (285 aa).

In terms of domain architecture, PABS spans 5–241; that stretch reads DTWFTEHFQT…GWWSVTLSSK (237 aa). An S-methyl-5'-thioadenosine-binding site is contributed by Gln-35. Positions 66 and 90 each coordinate spermidine. Residues Asp-110 and 141-142 each bind S-methyl-5'-thioadenosine; that span reads DG. The active-site Proton acceptor is Asp-160. Residue 160–163 coordinates spermidine; the sequence is DSTD. Pro-167 contacts S-methyl-5'-thioadenosine.

The protein belongs to the spermidine/spermine synthase family. In terms of assembly, homodimer or homotetramer.

The protein localises to the cytoplasm. It carries out the reaction S-adenosyl 3-(methylsulfanyl)propylamine + putrescine = S-methyl-5'-thioadenosine + spermidine + H(+). Its pathway is amine and polyamine biosynthesis; spermidine biosynthesis; spermidine from putrescine: step 1/1. Its function is as follows. Catalyzes the irreversible transfer of a propylamine group from the amino donor S-adenosylmethioninamine (decarboxy-AdoMet) to putrescine (1,4-diaminobutane) to yield spermidine. This is Polyamine aminopropyltransferase from Xylella fastidiosa (strain Temecula1 / ATCC 700964).